We begin with the raw amino-acid sequence, 456 residues long: N(6)-adenosine-methyltransferase non-catalytic subunit METTL14 (456 aa).

A disordered region spans residues 43-74 (EIAETRETSRASYDTSAAVSKRKLPEEGKADE). Basic and acidic residues predominate over residues 65–74 (KLPEEGKADE). Interaction with METTL3 stretches follow at residues 135–136 (RD) and 237–238 (SG). The tract at residues 245–254 (RMCLRKWGFR) is positively charged region required for RNA-binding. Interaction with METTL3 regions lie at residues 255–258 (RSED) and 278–287 (KAIFQRTKEH). Residues 297–298 (HR) form a positively charged region required for RNA-binding region. Residues 308 to 312 (NVDID) are interaction with METTL3. Residues 395–456 (LRPKTPPPKS…GPHRGVFAPR (62 aa)) form a disordered region. Positions 410–421 (ASRGGGRGGASA) are enriched in gly residues. The span at 423–441 (RGERGRERNRGSFRGDRGN) shows a compositional bias: basic and acidic residues.

It belongs to the MT-A70-like family. In terms of assembly, heterodimer; heterodimerizes with mettl3 to form an antiparallel heterodimer that constitutes an active methyltransferase. Component of the WMM complex, a N6-methyltransferase complex composed of a catalytic subcomplex, named MAC, and of an associated subcomplex, named MACOM. The MAC subcomplex is composed of mettl3 and mettl14.

Its subcellular location is the nucleus. In terms of biological role, the METTL3-METTL14 heterodimer forms a N6-methyltransferase complex that methylates adenosine residues at the N(6) position of some mRNAs and regulates the circadian clock, differentiation of embryonic stem cells and cortical neurogenesis. In the heterodimer formed with mettl3, mettl14 constitutes the RNA-binding scaffold that recognizes the substrate rather than the catalytic core. N6-methyladenosine (m6A), which takes place at the 5'-[AG]GAC-3' consensus sites of some mRNAs, plays a role in mRNA stability and processing. This chain is N(6)-adenosine-methyltransferase non-catalytic subunit METTL14 (mettl14), found in Xenopus laevis (African clawed frog).